The following is a 357-amino-acid chain: CCN family member 3 (357 aa).

A signal peptide spans 1–31 (MQSVQSTSFCLRKQCLCLTFLLLHLLGQVAA). Positions 32–105 (TQRCPPQCPG…SNQTGICTAV (74 aa)) constitute an IGFBP N-terminal domain. Intrachain disulfides connect C35-C61, C39-C63, C43-C64, C50-C67, C75-C89, and C81-C102. N-linked (GlcNAc...) asparagine glycosylation occurs at N97. The region spanning 108-174 (DNCVFDGVIY…GECCEKWICG (67 aa)) is the VWFC domain. Residues 205–250 (NCIEQTTEWTACSKSCGMGFSTRVTNRNRQCEMLKQTRLCMVRPCE) form the TSP type-1 domain. C244 is lipidated: S-palmitoyl cysteine. 5 disulfides stabilise this stretch: C264-C301, C281-C315, C292-C331, C295-C333, and C300-C337. One can recognise a CTCK domain in the interval 264 to 338 (CLRTKKSLKA…GTCTCHTNCP (75 aa)). N-linked (GlcNAc...) asparagine glycosylation is present at N280.

This sequence belongs to the CCN family. In terms of assembly, interacts with FBLN1. Interacts (via CTCK domain) with NOTCH1 (via the EGF-like repeat region). Interacts with GJA1/CX43. Interacts with ITGA5:ITGB1, ITGAV:ITGB3 and ITGAV:ITGB5. Interacts with ZDHHC22; the interaction may lead to CCN3 palmitoylation. May be palmitoylated on Cys-244, which is important for extracellular secretion. As to expression, expressed in endothelial cells (at protein level). Expressed in bone marrow and thymic cells.

The protein localises to the secreted. It is found in the cytoplasm. Its subcellular location is the cell junction. It localises to the gap junction. Immediate-early protein playing a role in various cellular processes including proliferation, adhesion, migration, differentiation and survival. Acts by binding to integrins or membrane receptors such as NOTCH1. Essential regulator of hematopoietic stem and progenitor cell function. Inhibits myogenic differentiation through the activation of Notch-signaling pathway. Inhibits vascular smooth muscle cells proliferation by increasing expression of cell-cycle regulators such as CDKN2B or CDKN1A independently of TGFB1 signaling. Ligand of integrins ITGAV:ITGB3 and ITGA5:ITGB1, acts directly upon endothelial cells to stimulate pro-angiogenic activities and induces angiogenesis. In endothelial cells, supports cell adhesion, induces directed cell migration (chemotaxis) and promotes cell survival. Also plays a role in cutaneous wound healing acting as integrin receptor ligand. Supports skin fibroblast adhesion through ITGA5:ITGB1 and ITGA6:ITGB1 and induces fibroblast chemotaxis through ITGAV:ITGB5. Seems to enhance bFGF-induced DNA synthesis in fibroblasts. Involved in bone regeneration as a negative regulator. Enhances the articular chondrocytic phenotype, whereas it repressed the one representing endochondral ossification. Impairs pancreatic beta-cell function, inhibits beta-cell proliferation and insulin secretion. Plays a role as negative regulator of endothelial pro-inflammatory activation reducing monocyte adhesion, its anti-inflammatory effects occur secondary to the inhibition of NF-kappaB signaling pathway. Contributes to the control and coordination of inflammatory processes in atherosclerosis. Attenuates inflammatory pain through regulation of IL1B- and TNF-induced MMP9, MMP2 and CCL2 expression. Inhibits MMP9 expression through ITGB1 engagement. Brain osteoanabolic hormone. Drives osteogenesis in osteochondral skeletal stem cells. During lactation, maintains the maternal skeleton and viability of offspring. The polypeptide is CCN family member 3 (Homo sapiens (Human)).